A 380-amino-acid chain; its full sequence is uncharacterized protein (380 aa).

Residues 287–318 form the 4Fe-4S ferredoxin-type domain; that stretch reads LRPKIYQDKCKNCRECLVEKYCPTFAIKRENG.

This is an uncharacterized protein from Methanocaldococcus jannaschii (strain ATCC 43067 / DSM 2661 / JAL-1 / JCM 10045 / NBRC 100440) (Methanococcus jannaschii).